Here is a 405-residue protein sequence, read N- to C-terminus: L-rhamnonate dehydratase (405 aa).

His-33 and Arg-59 together coordinate substrate. Mg(2+) contacts are provided by Asp-226, Glu-252, and Glu-280. His-329 acts as the Proton acceptor in catalysis. Glu-349 serves as a coordination point for substrate.

This sequence belongs to the mandelate racemase/muconate lactonizing enzyme family. RhamD subfamily. Homooctamer; tetramer of dimers. Mg(2+) serves as cofactor.

The catalysed reaction is L-rhamnonate = 2-dehydro-3-deoxy-L-rhamnonate + H2O. Its function is as follows. Catalyzes the dehydration of L-rhamnonate to 2-keto-3-deoxy-L-rhamnonate (KDR). Can also dehydrate L-lyxonate and L-mannonate, although less efficiently, but not 2-keto-4-hydroxyheptane-1,7-dioate. In Salmonella typhimurium (strain LT2 / SGSC1412 / ATCC 700720), this protein is L-rhamnonate dehydratase (rhmD).